The primary structure comprises 583 residues: Probable lysosomal cobalamin transporter (583 aa).

Transmembrane regions (helical) follow at residues 8–28, 41–61, 95–115, 145–165, 188–208, 312–332, 347–367, 375–395, 418–438, and 506–526; these read LIWA…SVFI, VILT…LVPV, IVYY…IPFI, TVSF…VPVA, ALTF…VLYT, LLSG…MLLT, GYIL…VQSA, VIFT…ISAV, LLAT…TSMI, and FFGA…LLVM. Positions 541–552 are enriched in acidic residues; sequence LDEDAEEAEEES. Residues 541–562 form a disordered region; that stretch reads LDEDAEEAEEESLLANTRGRAE.

This sequence belongs to the LIMR family. LMBRD1 subfamily.

The protein resides in the lysosome membrane. Its function is as follows. Probable lysosomal cobalamin transporter. Required to export cobalamin from lysosomes allowing its conversion to cofactors. This is Probable lysosomal cobalamin transporter from Aspergillus oryzae (strain ATCC 42149 / RIB 40) (Yellow koji mold).